The sequence spans 444 residues: Putative cytochrome P450 120 (444 aa).

Cys-391 provides a ligand contact to heme.

Belongs to the cytochrome P450 family. It depends on heme as a cofactor.

The sequence is that of Putative cytochrome P450 120 (cyp120) from Synechocystis sp. (strain ATCC 27184 / PCC 6803 / Kazusa).